Here is a 238-residue protein sequence, read N- to C-terminus: 15,16-dihydrobiliverdin:ferredoxin oxidoreductase (238 aa).

This sequence belongs to the HY2 family.

The enzyme catalyses 15,16-dihydrobiliverdin + oxidized 2[4Fe-4S]-[ferredoxin] = biliverdin IXalpha + reduced 2[4Fe-4S]-[ferredoxin] + 2 H(+). Catalyzes the two-electron reduction of biliverdin IX-alpha at the C15 methine bridge. The chain is 15,16-dihydrobiliverdin:ferredoxin oxidoreductase from Prochlorococcus marinus (strain NATL1A).